A 209-amino-acid polypeptide reads, in one-letter code: Rac-like GTP-binding protein ARAC9 (209 aa).

25 to 32 is a binding site for GTP; the sequence is GDGAVGKT. Residues 47–55 carry the Effector region motif; it reads YVPTVFDNF. Residues 72–76 and 130–133 contribute to the GTP site; these read DTAGQ and TKSD. Cys206 is subject to Cysteine methyl ester. Cys206 carries the S-geranylgeranyl cysteine lipid modification. Positions 207–209 are cleaved as a propeptide — removed in mature form; the sequence is HVL.

Belongs to the small GTPase superfamily. Rho family. In terms of assembly, interacts with SPK1.

Its subcellular location is the cytoplasm. The protein resides in the membrane. Functionally, inactive GDP-bound Rho GTPases reside in the cytosol, are found in a complex with Rho GDP-dissociation inhibitors (Rho GDIs), and are released from the GDI protein in order to translocate to membranes upon activation. This Arabidopsis thaliana (Mouse-ear cress) protein is Rac-like GTP-binding protein ARAC9 (ARAC9).